Reading from the N-terminus, the 444-residue chain is MSNNIPQNTVEVSSVYTYKELSIDKLKYEYEITVGSDYIKQKVNSRLQEIAENAKSPGFRAGKMPYDLVVANYKNEALEYVINNTIDYCSSDLMKKIEVKSHIYPKVDVISLPDLGKENEEGNFVYKLSFESMPEVPVIDLDKINLKKIEAKIEEEDIKEFIDSIKTKFPNFASVDDASYQAKDGDKLIIDFEGRIRNKLFQGGSSKNFAVNLGSGTFINGFEDQLTGMKKGETKNFKLKFPENYQAISLAGQEADFSVRVNEIQIAKDFENDDEIAKSIGFKDYSLLINHAKKMIGDQCTEMRNLLIKKELFDYLDANYSFDLPTDIVKQEQQRMEGELGAQNDSRKEAEKRVKLAMLFMKFSAEHKISLTQNDVLSVIVNQYVSKDVQFDRVLKHFESNKQFQELVRGQALEYKVTDYIIEKVSKEEQIVSVKELKELFDNI.

Positions 185–270 (GDKLIIDFEG…VNEIQIAKDF (86 aa)) constitute a PPIase FKBP-type domain.

It belongs to the FKBP-type PPIase family. Tig subfamily.

Its subcellular location is the cytoplasm. The enzyme catalyses [protein]-peptidylproline (omega=180) = [protein]-peptidylproline (omega=0). Functionally, involved in protein export. Acts as a chaperone by maintaining the newly synthesized protein in an open conformation. Functions as a peptidyl-prolyl cis-trans isomerase. In Wolbachia pipientis wMel, this protein is Trigger factor.